The sequence spans 81 residues: Putative phytosulfokines 6 (81 aa).

A signal peptide spans 1–20; the sequence is MKQSLCLAVLFLILSTSSSA. A propeptide spanning residues 21–72 is cleaved from the precursor; that stretch reads IRRGKEDQEINPLVSATSVEEDSVNKLMGMEYCGEGDEECLRRRMMTESHLD. A sulfotyrosine mark is found at Tyr-73 and Tyr-75. A propeptide spanning residues 78-81 is cleaved from the precursor; it reads HHKH.

This sequence belongs to the phytosulfokine family. Post-translationally, sulfation is important for activity and for the binding to a putative membrane receptor. PSK-beta is an enzymatic derivative of PSK-alpha. Expressed in roots, leaves, stems, flowers and siliques. Most abundant in vascular bundles and in root tips.

The protein localises to the secreted. Promotes plant cell differentiation, organogenesis and somatic embryogenesis as well as cell proliferation. The chain is Putative phytosulfokines 6 (PSK6) from Arabidopsis thaliana (Mouse-ear cress).